The chain runs to 115 residues: DNA-binding protein PYRAB09250 (115 aa).

The protein belongs to the PDCD5 family.

The polypeptide is DNA-binding protein PYRAB09250 (Pyrococcus abyssi (strain GE5 / Orsay)).